Reading from the N-terminus, the 292-residue chain is Glycine--tRNA ligase alpha subunit (292 aa).

It belongs to the class-II aminoacyl-tRNA synthetase family. As to quaternary structure, tetramer of two alpha and two beta subunits.

The protein localises to the cytoplasm. The catalysed reaction is tRNA(Gly) + glycine + ATP = glycyl-tRNA(Gly) + AMP + diphosphate. The chain is Glycine--tRNA ligase alpha subunit from Synechococcus elongatus (strain ATCC 33912 / PCC 7942 / FACHB-805) (Anacystis nidulans R2).